Here is a 586-residue protein sequence, read N- to C-terminus: Succinate dehydrogenase flavoprotein subunit (586 aa).

Residues 10–15 and 33–48 each bind FAD; these read GGGLAG and SIVPVKRSHSVCAQGG. H41 is modified (tele-8alpha-FAD histidine). Substrate contacts are provided by H236 and S250. The Proton acceptor role is filled by R285. H352 is a binding site for substrate. E376 lines the FAD pocket. Residue R386 participates in substrate binding. 391 to 392 is an FAD binding site; the sequence is SL.

It belongs to the FAD-dependent oxidoreductase 2 family. FRD/SDH subfamily. As to quaternary structure, in B.subtilis succinate dehydrogenase forms part of an enzyme complex containing three subunits: a flavoprotein, an iron-sulfur protein and cytochrome b-558. Interacts with FloT. It depends on FAD as a cofactor.

It localises to the cell membrane. The protein resides in the membrane raft. It catalyses the reaction a quinone + succinate = fumarate + a quinol. Its pathway is carbohydrate metabolism; tricarboxylic acid cycle; fumarate from succinate (bacterial route): step 1/1. The chain is Succinate dehydrogenase flavoprotein subunit (sdhA) from Bacillus subtilis (strain 168).